We begin with the raw amino-acid sequence, 436 residues long: F-box/LRR-repeat protein At2g40920 (436 aa).

Residues 48–98 form the F-box domain; sequence EYLLQNFDLDHVMEILMRFPLTSLTRFKCVSKQWSSLISSRYFCNLLYTTV. 2 LRR repeats span residues 276–301 and 393–416; these read NCVV…IHLD and YYNL…WFDK.

This is F-box/LRR-repeat protein At2g40920 from Arabidopsis thaliana (Mouse-ear cress).